Here is an 88-residue protein sequence, read N- to C-terminus: Small ribosomal subunit protein bS20 (88 aa).

The segment at 1–20 (MANTKSARKSLIKSKQQRKC) is disordered.

It belongs to the bacterial ribosomal protein bS20 family.

Its function is as follows. Binds directly to 16S ribosomal RNA. The polypeptide is Small ribosomal subunit protein bS20 (Blochmanniella pennsylvanica (strain BPEN)).